Reading from the N-terminus, the 362-residue chain is Probable secreted beta-glucosidase UTH1 (362 aa).

An N-terminal signal peptide occupies residues 1 to 17; it reads MKLSALLALSASTAVLA.

This sequence belongs to the SUN family.

The protein localises to the mitochondrion outer membrane. Its subcellular location is the secreted. The protein resides in the cell wall. In terms of biological role, involved in aging, oxidative stress response, and in the regulation of mitochondrial biogenesis. Inactivation of UTH1 increases life span, leads to higher resistance to heat stress and to hydrogen peroxide, and increases sensitivity to the superoxide radical-generating drug paraquat and to copper. Also required for the selective autophagic degradation of mitochondria (mitophagy) in response to nitrogen starvation. May play a role in cell wall morphogenesis and septation. Involved in the remodeling of the cell wall during the various phases of yeast culture development and under various environmental conditions and plays a role in septation. Involved in cell sensitivity to boric acid. This chain is Probable secreted beta-glucosidase UTH1 (UTH1), found in Saccharomyces cerevisiae (strain YJM789) (Baker's yeast).